Consider the following 287-residue polypeptide: Troponin T, cardiac muscle (287 aa).

2 stretches are compositionally biased toward acidic residues: residues 1–31 and 44–59; these read MSDVEETVDEYEEQEEAAVEEHEESVEEEAG and EDGEEEEGREAEDGPV. 2 disordered regions span residues 1-85 and 124-208; these read MSDV…GERV and KDRI…EKKK. Position 2 is an N-acetylserine (Ser2). A Phosphoserine; by CK2 modification is found at Ser2. The span at 66–79 shows a compositional bias: pro residues; it reads APGPFMPNLVPPKI. Basic and acidic residues-rich tracts occupy residues 124–173 and 192–208; these read KDRI…DEAR and QAERKSGKRQTEREKKK. Residue Ser197 is modified to Phosphoserine; by PKC/PRKCA. Thr202 is subject to Phosphothreonine; by PKC/PRKCA and RAF1. Thr283 is modified (phosphothreonine; by PKC/PRKCA).

The protein belongs to the troponin T family. Phosphorylation at Thr-202 by PRKCA induces significant reduction in myofilament calcium sensitivity and actomyosin ATPase activity.

Troponin T is the tropomyosin-binding subunit of troponin, the thin filament regulatory complex which confers calcium-sensitivity to striated muscle actomyosin ATPase activity. This Ovis aries (Sheep) protein is Troponin T, cardiac muscle (TNNT2).